Reading from the N-terminus, the 688-residue chain is Glycine--tRNA ligase beta subunit (688 aa).

It belongs to the class-II aminoacyl-tRNA synthetase family. Tetramer of two alpha and two beta subunits.

The protein resides in the cytoplasm. It carries out the reaction tRNA(Gly) + glycine + ATP = glycyl-tRNA(Gly) + AMP + diphosphate. This is Glycine--tRNA ligase beta subunit from Aliivibrio fischeri (strain MJ11) (Vibrio fischeri).